The following is a 99-amino-acid chain: Small integral membrane protein 9 (99 aa).

An N-terminal signal peptide occupies residues 1–26 (MEPQKLLIIGFLLCSLTCLLLETVAS). The Extracellular portion of the chain corresponds to 27–73 (SPLPLSALGIQEKTGSKPRSGGNHRSWLNNFRDYLWQLIKSALPPAA). The helical transmembrane segment at 74 to 94 (IVAFLLTSALMGILCCFTILV) threads the bilayer. The Cytoplasmic portion of the chain corresponds to 95-99 (VDPVH).

The protein localises to the cell membrane. The protein is Small integral membrane protein 9 (SMIM9) of Homo sapiens (Human).